The following is a 95-amino-acid chain: Protein TusB (95 aa).

It belongs to the DsrH/TusB family. Heterohexamer, formed by a dimer of trimers. The hexameric TusBCD complex contains 2 copies each of TusB, TusC and TusD. The TusBCD complex interacts with TusE.

The protein localises to the cytoplasm. Functionally, part of a sulfur-relay system required for 2-thiolation of 5-methylaminomethyl-2-thiouridine (mnm(5)s(2)U) at tRNA wobble positions. The chain is Protein TusB from Pectobacterium carotovorum subsp. carotovorum (strain PC1).